Here is a 355-residue protein sequence, read N- to C-terminus: UDP-3-O-acylglucosamine N-acyltransferase (355 aa).

His-252 (proton acceptor) is an active-site residue.

It belongs to the transferase hexapeptide repeat family. LpxD subfamily. As to quaternary structure, homotrimer.

It carries out the reaction a UDP-3-O-[(3R)-3-hydroxyacyl]-alpha-D-glucosamine + a (3R)-hydroxyacyl-[ACP] = a UDP-2-N,3-O-bis[(3R)-3-hydroxyacyl]-alpha-D-glucosamine + holo-[ACP] + H(+). It functions in the pathway bacterial outer membrane biogenesis; LPS lipid A biosynthesis. Catalyzes the N-acylation of UDP-3-O-acylglucosamine using 3-hydroxyacyl-ACP as the acyl donor. Is involved in the biosynthesis of lipid A, a phosphorylated glycolipid that anchors the lipopolysaccharide to the outer membrane of the cell. This Polynucleobacter asymbioticus (strain DSM 18221 / CIP 109841 / QLW-P1DMWA-1) (Polynucleobacter necessarius subsp. asymbioticus) protein is UDP-3-O-acylglucosamine N-acyltransferase.